Consider the following 359-residue polypeptide: Photosystem II protein D1 1 (359 aa).

3 helical membrane-spanning segments follow: residues 29-46 (YVGWFGVLMIPTLLAATT), 118-133 (HFLIGIFCYMGREWEL), and 142-156 (WICVAYSAPVAAASA). Residue H118 participates in chlorophyll a binding. Residue Y126 coordinates pheophytin a. [CaMn4O5] cluster-binding residues include D170 and E189. A helical transmembrane segment spans residues 197-218 (FHMMGVAGVFGGSLFSAMHGSL). H198 provides a ligand contact to chlorophyll a. Residues H215 and 264-265 (SF) contribute to the a quinone site. H215 contributes to the Fe cation binding site. H272 provides a ligand contact to Fe cation. Residues 274–288 (FLAAWPVVGIWFTAL) traverse the membrane as a helical segment. Residues H332, E333, D342, and A344 each contribute to the [CaMn4O5] cluster site. A propeptide spanning residues 345–359 (AAESTPVALQAPAIG) is cleaved from the precursor.

This sequence belongs to the reaction center PufL/M/PsbA/D family. In terms of assembly, PSII is composed of 1 copy each of membrane proteins PsbA, PsbB, PsbC, PsbD, PsbE, PsbF, PsbH, PsbI, PsbJ, PsbK, PsbL, PsbM, PsbT, PsbX, PsbY, PsbZ, Psb30/Ycf12, peripheral proteins PsbO, CyanoQ (PsbQ), PsbU, PsbV and a large number of cofactors. It forms dimeric complexes. The D1/D2 heterodimer binds P680, chlorophylls that are the primary electron donor of PSII, and subsequent electron acceptors. It shares a non-heme iron and each subunit binds pheophytin, quinone, additional chlorophylls, carotenoids and lipids. D1 provides most of the ligands for the Mn4-Ca-O5 cluster of the oxygen-evolving complex (OEC). There is also a Cl(-1) ion associated with D1 and D2, which is required for oxygen evolution. The PSII complex binds additional chlorophylls, carotenoids and specific lipids. serves as cofactor. Post-translationally, tyr-161 forms a radical intermediate that is referred to as redox-active TyrZ, YZ or Y-Z. In terms of processing, C-terminally processed by CtpA; processing is essential to allow assembly of the oxygen-evolving complex and thus photosynthetic growth.

It localises to the cellular thylakoid membrane. The enzyme catalyses 2 a plastoquinone + 4 hnu + 2 H2O = 2 a plastoquinol + O2. Its function is as follows. Photosystem II (PSII) is a light-driven water:plastoquinone oxidoreductase that uses light energy to abstract electrons from H(2)O, generating O(2) and a proton gradient subsequently used for ATP formation. It consists of a core antenna complex that captures photons, and an electron transfer chain that converts photonic excitation into a charge separation. The D1/D2 (PsbA/PsbD) reaction center heterodimer binds P680, the primary electron donor of PSII as well as several subsequent electron acceptors. The chain is Photosystem II protein D1 1 from Synechococcus sp. (strain WH7803).